Here is a 269-residue protein sequence, read N- to C-terminus: MKFSLKSLLTIAAAASTLILAGCGEKAVDNNKVKIGVMAGAEAQVAEVAAKVAKEKYNLDVELVTFTDYVTPNAALDDGSIDANAFQHKPYLDKQIADRGYKLAIVGNTFVYPIAGYSKQIKSVDELQDGARIAVPNDPTNLGRSLLLLQQQGLLKLREDVGLLATVRDIVENPKKLEILELDAAQLPRSLDDVALSIINTTYASSINLTPEKDGIFVENKESPYVNILVAREANVNAENVQNFKKAYQTDEVAKAASEIFQGGAVKGW.

The N-terminal stretch at 1–22 (MKFSLKSLLTIAAAASTLILAG) is a signal peptide. A lipid anchor (N-palmitoyl cysteine) is attached at C23. C23 carries the S-diacylglycerol cysteine lipid modification.

It belongs to the NlpA lipoprotein family.

It localises to the cell membrane. This protein is a component of a D-methionine permease, a binding protein-dependent, ATP-driven transport system. In Vibrio cholerae serotype O1 (strain ATCC 39315 / El Tor Inaba N16961), this protein is Probable D-methionine-binding lipoprotein MetQ (metQ).